Reading from the N-terminus, the 551-residue chain is MLSRKCGSLSLTLKNFNSTLSVAYSASDAALKIPIADPSENAASKYANKPAKTLNDAVRERSERFRSRVYTAKIPKLHEEQVSSGFSSPCNKLRSFLHSRDYMAFLVELTLQSRMDENFGAKMFQNNDLSIAEFSAFIEGLLSVNNLLHKLSATLPNVSGTEMVFSLYQLYLKTVTPGPLSPLQLHDFNKFIRFFIRSAQLRKAQTVLDCILKSNNNQLPCDSATATHYLQLRCGALPRNWKVLDENLGRSTRLGARKNRYQLVSHSYKALDHKSVLTFMSLLSDPKSVWFHRKSAALESAVVYSLGFMGQLKLLEEHVWRNWGISLQEHNQVTDASFTSPSSEVLVAVLTSYASNKNISSALHLIDGFMAKYPTLELDHVFWRRLFQWSTRVWSEKTDPRGELSRGCWRVMREWHAARNRQLPADAVLLNERFVVLSRTNNYRDAIEVVEQCYSSFFQKANLSRHEAVLFQKFAKLILKNMAHLGYYHKPLKFIKEWSPNKLLEHTLRAYFEKHRNAYSARKQRRTEAAQKAQKRFDDEEEDSMLLGRLW.

The disordered stretch occupies residues alanine 530–tryptophan 551.

The protein belongs to the AEP2 family. Binds to the 5'UTR of the OLI1 mRNA.

The protein localises to the mitochondrion. Its function is as follows. Required for translation of the mitochondrial OLI1 transcript coding for the mitochondrial ATP synthase subunit 9. The polypeptide is ATPase expression protein 2, mitochondrial (AEP2) (Lachancea thermotolerans (strain ATCC 56472 / CBS 6340 / NRRL Y-8284) (Yeast)).